The following is a 362-amino-acid chain: MIIDRVEVETINSFSKLELLKEIYGLIWILPILALLLGITIEVLVIVWLEREISASIQQRIGPEYAGPLGLLQAIADGTKLLLKEDILPSRGEIPLFSIGPSIAVISILLSFLVIPLGYHFVLADLSIGVFLWIAISSIAPIGLLMAGYSSNNKYSFLGGLRAAAQSISYEIPLTFCVLAISLLSNSLSTVDIVEAQSKYGFFGWNLWRQPIGFLVFLISSLAECERLPFDLPEAEEELVAGYQTEYSGIKYGLFYLVSYLNLLVSSLFVTVLYLGGWNFSIPYISFFGFFQMNKIIGILEMVIGIFITLTKAYLFLFISITIRWTLPRMRMDQLLNLGWKFLLPISLGNLLLTTSFQLVSL.

8 consecutive transmembrane segments (helical) span residues 27–47 (IWILPILALLLGITIEVLVIV), 103–123 (IAVISILLSFLVIPLGYHFVL), 128–148 (IGVFLWIAISSIAPIGLLMAG), 164–184 (AAQSISYEIPLTFCVLAISLL), 202–222 (FFGWNLWRQPIGFLVFLISSL), 247–267 (YSGIKYGLFYLVSYLNLLVSS), 303–323 (VIGIFITLTKAYLFLFISITI), and 342–362 (FLLPISLGNLLLTTSFQLVSL).

Belongs to the complex I subunit 1 family. NDH is composed of at least 16 different subunits, 5 of which are encoded in the nucleus.

The protein localises to the plastid. It is found in the chloroplast thylakoid membrane. It catalyses the reaction a plastoquinone + NADH + (n+1) H(+)(in) = a plastoquinol + NAD(+) + n H(+)(out). The catalysed reaction is a plastoquinone + NADPH + (n+1) H(+)(in) = a plastoquinol + NADP(+) + n H(+)(out). Its function is as follows. NDH shuttles electrons from NAD(P)H:plastoquinone, via FMN and iron-sulfur (Fe-S) centers, to quinones in the photosynthetic chain and possibly in a chloroplast respiratory chain. The immediate electron acceptor for the enzyme in this species is believed to be plastoquinone. Couples the redox reaction to proton translocation, and thus conserves the redox energy in a proton gradient. This chain is NAD(P)H-quinone oxidoreductase subunit 1, chloroplastic, found in Saccharum hybrid (Sugarcane).